Consider the following 337-residue polypeptide: 2-oxoglutarate receptor 1 (337 aa).

Over 1 to 34 the chain is Extracellular; sequence MNEPLDYLANASDFPDYAAAFGNCTDENIPLKMH. N-linked (GlcNAc...) asparagine glycans are attached at residues Asn-10 and Asn-23. Residues 35–55 form a helical membrane-spanning segment; sequence YLPVIYGIIFLVGFPGNAVVI. Residues 56–69 lie on the Cytoplasmic side of the membrane; sequence STYIFKMRPWKSST. The chain crosses the membrane as a helical span at residues 70–90; the sequence is IIMLNLACTDLLYLTSLPFLI. Topologically, residues 91-116 are extracellular; it reads HYYASGENWIFGDFMCKFIRFSFHFN. A disulfide bridge connects residues Cys-106 and Cys-183. The helical transmembrane segment at 117–137 threads the bilayer; sequence LYSSILFLTCFSIFRYCVIIH. The Cytoplasmic portion of the chain corresponds to 138–151; sequence PMSCFSIHKTRCAV. The helical transmembrane segment at 152–172 threads the bilayer; the sequence is VACAVVWIISLVAVIPMTFLI. The Extracellular segment spans residues 173–201; it reads TSTNRTNRSACLDLTSSDELNTIKWYNLI. Asn-176 and Asn-179 each carry an N-linked (GlcNAc...) asparagine glycan. A helical transmembrane segment spans residues 202–222; it reads LTATTFCLPLVIVTLCYTTII. At 223-242 the chain is on the cytoplasmic side; sequence HTLTHGLQTDSCLKQKARRL. The helical transmembrane segment at 243–263 threads the bilayer; the sequence is TILLLLAFYVCFLPFHILRVI. Residues 264-284 are Extracellular-facing; that stretch reads RIESRLLSISCSIENQIHEAY. The chain crosses the membrane as a helical span at residues 285–305; it reads IVSRPLAALNTFGNLLLYVVV. Residues 306 to 337 are Cytoplasmic-facing; that stretch reads SDNFQQAVCSTVRCKVSGNLEQAKKISYSNNP.

The protein belongs to the G-protein coupled receptor 1 family. In terms of tissue distribution, detected in kidney and, to a lower extent, in placenta. Not detected in brain tissues including the frontal cortex, caudate putamen, thalamus, hypothalamus, hippocampus or pons.

The protein localises to the cell membrane. Its function is as follows. G protein-coupled receptor for dicarboxylates and amino dicarboxylates. Receptor for itaconate, a metabolite produced by myeloid lineages. In the respiratory epithelium, couples the binding of itaconate to the activation of GNA11 and downstream intracellular Ca(2+) release, leading to mucocilliary clearance of airborne pathogens. Receptor for leukotriene E4 (LTE4) produced by mast cells upon allergic inflammation. Binds with high affinity to LTE4 and elicits mucin release from pulmonary epithelium in response to airborne fungi allergens. Regulates mucin-producing goblet cell homeostasis. Receptor for alpha-ketoglutarate produced by proximal tubule renal cells upon metabolic alkalosis. In an intrarenal paracrine signaling pathway, binds alpha-ketoglutarate and drives transepithelial salt reabsorption and bicarbonate secretion by SLC26A4/pendrin-positive intercalated cells. The protein is 2-oxoglutarate receptor 1 (OXGR1) of Homo sapiens (Human).